A 698-amino-acid polypeptide reads, in one-letter code: MVPGQAQPQSPEMLLLPLLLPVLGAGSLNKDPSYSLQVQRQVPVPEGLCVIVSCNLSYPRDGWDESTAAYGYWFKGRTSPKTGAPVATNNQSREVEMSTRDRFQLTGDPGKGSCSLVIRDAQREDEAWYFFRVERGSRVRHSFLSNAFFLKVTALTKKPDVYIPETLEPGQPVTVICVFNWAFKKCPAPSFSWTGAALSPRRTRPSTSHFSVLSFTPSPQDHDTDLTCHVDFSRKGVSAQRTVRLRVAYAPKDLIISISHDNTSALELQGNVIYLEVQKGQFLRLLCAADSQPPATLSWVLQDRVLSSSHPWGPRTLGLELRGVRAGDSGRYTCRAENRLGSQQQALDLSVQYPPENLRVMVSQANRTVLENLGNGTSLPVLEGQSLRLVCVTHSSPPARLSWTRWGQTVGPSQPSDPGVLELPPIQMEHEGEFTCHAQHPLGSQHVSLSLSVHYPPQLLGPSCSWEAEGLHCSCSSQASPAPSLRWWLGEELLEGNSSQGSFEVTPSSAGPWANSSLSLHGGLSSGLRLRCKAWNVHGAQSGSVFQLLPGKLEHGGGLGLGAALGAGVAALLAFCSCLVVFRVKICRKEARKRAAAEQDVPSTLGPISQGHQHECSAGSSQDHPPPGAATYTPGKGEEQELHYASLSFQGLRLWEPADQEAPSTTEYSEIKIHTGQPLRGPGFGLQLEREMSGMVPK.

An N-terminal signal peptide occupies residues 1-27; it reads MVPGQAQPQSPEMLLLPLLLPVLGAGS. At 28–561 the chain is on the extracellular side; the sequence is LNKDPSYSLQ…KLEHGGGLGL (534 aa). The Ig-like V-type domain occupies 31–134; sequence DPSYSLQVQR…DEAWYFFRVE (104 aa). 3 disulfides stabilise this stretch: cysteine 49–cysteine 186, cysteine 54–cysteine 114, and cysteine 177–cysteine 228. 2 N-linked (GlcNAc...) asparagine glycosylation sites follow: asparagine 55 and asparagine 90. Arginine 132 provides a ligand contact to N-acetylneuraminate. 3 Ig-like C2-type domains span residues 159–244, 251–350, and 355–452; these read PDVY…RTVR, PKDL…LDLS, and PENL…LSLS. N-linked (GlcNAc...) asparagine glycosylation occurs at asparagine 262. An intrachain disulfide couples cysteine 287 to cysteine 334. N-linked (GlcNAc...) asparagine glycans are attached at residues asparagine 366 and asparagine 375. An intrachain disulfide couples cysteine 391 to cysteine 436. N-linked (GlcNAc...) asparagine glycans are attached at residues asparagine 497 and asparagine 515. Residues 562-584 traverse the membrane as a helical segment; it reads GAALGAGVAALLAFCSCLVVFRV. Topologically, residues 585–698 are cytoplasmic; that stretch reads KICRKEARKR…EREMSGMVPK (114 aa). A disordered region spans residues 596 to 635; sequence AAEQDVPSTLGPISQGHQHECSAGSSQDHPPPGAATYTPG. The ITIM motif motif lies at 642–647; the sequence is LHYASL. Tyrosine 668 is subject to Phosphotyrosine. Residues 675–698 are disordered; the sequence is TGQPLRGPGFGLQLEREMSGMVPK.

Belongs to the immunoglobulin superfamily. SIGLEC (sialic acid binding Ig-like lectin) family. Interacts with PTPN6/SHP-1 and PTPN11/SHP-2 upon phosphorylation. Phosphorylated on tyrosine residues. In terms of tissue distribution, expressed by macrophages in various tissues including Kupffer cells. Also found in brain microglia.

It localises to the membrane. Functionally, putative adhesion molecule that mediates sialic-acid dependent binding to cells. Preferentially binds to alpha-2,8-linked sialic acid. The sialic acid recognition site may be masked by cis interactions with sialic acids on the same cell surface. In the immune response, may act as an inhibitory receptor upon ligand induced tyrosine phosphorylation by recruiting cytoplasmic phosphatase(s) via their SH2 domain(s) that block signal transduction through dephosphorylation of signaling molecules. This is Sialic acid-binding Ig-like lectin 11 (SIGLEC11) from Homo sapiens (Human).